We begin with the raw amino-acid sequence, 172 residues long: Translation initiation factor IF-3 (172 aa).

The protein belongs to the IF-3 family. As to quaternary structure, monomer.

It localises to the cytoplasm. Functionally, IF-3 binds to the 30S ribosomal subunit and shifts the equilibrium between 70S ribosomes and their 50S and 30S subunits in favor of the free subunits, thus enhancing the availability of 30S subunits on which protein synthesis initiation begins. This is Translation initiation factor IF-3 from Geobacter sulfurreducens (strain ATCC 51573 / DSM 12127 / PCA).